The primary structure comprises 575 residues: DNA polymerase lambda (575 aa).

In terms of domain architecture, BRCT spans 36–132 (EAEEWLSSLR…RLVDVAGFSI (97 aa)). The tract at residues 160-205 (ALLQTALPPPPSPTRPVSPPQKTKEAPNTQAQPISDDEASDGEETQ) is disordered. A compositionally biased stretch (pro residues) spans 166 to 178 (LPPPPSPTRPVSP). Residues 194–203 (SDDEASDGEE) show a composition bias toward acidic residues. Positions 265–279 (KAYSVQGDKWRALGY) are DNA-binding. Catalysis depends on lysine 312, which acts as the Schiff-base intermediate with DNA. A DNA-binding region spans residues 345–348 (GTKT). DCTP is bound by residues arginine 386, 417–420 (SYRR), and 426–429 (GDVD). Residues 420–429 (RGKATCGDVD) are involved in primer binding. Residues aspartate 427, aspartate 429, and aspartate 490 each contribute to the Mn(2+) site. The tract at residues 466–505 (ENGQQQKYLGVCRLPGPGWRHRRLDIIVVPYSEFACALLY) is DNA-binding. Asparagine 513 is a binding site for dCTP.

This sequence belongs to the DNA polymerase type-X family. Interacts with PCNA. Interacts with PAXX; promoting POLL recruitment to double-strand breaks (DSBs) and stimulation of the end-filling activity of POLL. Interacts with XRCC4; promoting POLL recruitment to double-strand breaks (DSBs) and stimulation of the end-filling activity of POLL. Interacts with NHEJ1/XLF; promoting POLL recruitment to double-strand breaks (DSBs) and stimulation of the end-filling activity of POLL. The cofactor is Mn(2+).

The protein resides in the nucleus. It catalyses the reaction DNA(n) + a 2'-deoxyribonucleoside 5'-triphosphate = DNA(n+1) + diphosphate. Functionally, DNA polymerase that functions in several pathways of DNA repair. Involved in base excision repair (BER) responsible for repair of lesions that give rise to abasic (AP) sites in DNA. Also contributes to DNA double-strand break repair by non-homologous end joining and homologous recombination. Has both template-dependent and template-independent (terminal transferase) DNA polymerase activities. Also has a 5'-deoxyribose-5-phosphate lyase (dRP lyase) activity. The chain is DNA polymerase lambda from Macaca fascicularis (Crab-eating macaque).